A 209-amino-acid chain; its full sequence is Large ribosomal subunit protein uL4 (209 aa).

The segment at 50–78 (STLKKGEVSGGGKKPYQQKHTGRARQGSI) is disordered.

It belongs to the universal ribosomal protein uL4 family. Part of the 50S ribosomal subunit.

Functionally, one of the primary rRNA binding proteins, this protein initially binds near the 5'-end of the 23S rRNA. It is important during the early stages of 50S assembly. It makes multiple contacts with different domains of the 23S rRNA in the assembled 50S subunit and ribosome. Forms part of the polypeptide exit tunnel. The chain is Large ribosomal subunit protein uL4 from Mycoplasmoides gallisepticum (strain R(low / passage 15 / clone 2)) (Mycoplasma gallisepticum).